A 100-amino-acid polypeptide reads, in one-letter code: Large ribosomal subunit protein uL23 (100 aa).

Belongs to the universal ribosomal protein uL23 family. As to quaternary structure, part of the 50S ribosomal subunit. Contacts protein L29, and trigger factor when it is bound to the ribosome.

One of the early assembly proteins it binds 23S rRNA. One of the proteins that surrounds the polypeptide exit tunnel on the outside of the ribosome. Forms the main docking site for trigger factor binding to the ribosome. The protein is Large ribosomal subunit protein uL23 of Buchnera aphidicola subsp. Acyrthosiphon pisum (strain 5A).